The sequence spans 206 residues: Small ribosomal subunit protein uS4c (206 aa).

In terms of domain architecture, S4 RNA-binding spans 93 to 161 (MRLDNIVYRL…IEKNIELLDK (69 aa)).

This sequence belongs to the universal ribosomal protein uS4 family. Part of the 30S ribosomal subunit. Contacts protein S5. The interaction surface between S4 and S5 is involved in control of translational fidelity.

It is found in the plastid. Functionally, one of the primary rRNA binding proteins, it binds directly to 16S rRNA where it nucleates assembly of the body of the 30S subunit. Its function is as follows. With S5 and S12 plays an important role in translational accuracy. This Euglena longa (Euglenophycean alga) protein is Small ribosomal subunit protein uS4c (rps4).